The primary structure comprises 397 residues: MRCPKCLLCLSALLTLLGLKVYIEWTSESRLSKAYPSPRGTPPSPTPANPEPTLPANLSTRLGQTIPLPFAYWNQQQWRLGSLPSGDSTETGGCQAWGAAAATEIPDFASYPKDLRRFLLSAACRSFPQWLPGGGGSQVSSCSDTDVPYLLLAVKSEPGRFAERQAVRETWGSPAPGIRLLFLLGSPVGEAGPDLDSLVAWESRRYSDLLLWDFLDVPFNQTLKDLLLLAWLGRHCPTVSFVLRAQDDAFVHTPALLAHLRALPPASARSLYLGEVFTQAMPLRKPGGPFYVPESFFEGGYPAYASGGGYVIAGRLAPWLLRAAARVAPFPFEDVYTGLCIRALGLVPQAHPGFLTAWPADRTADHCAFRNLLLVRPLGPQASIRLWKQLQDPRLQC.

Over 1-6 (MRCPKC) the chain is Cytoplasmic. The helical; Signal-anchor for type II membrane protein transmembrane segment at 7 to 23 (LLCLSALLTLLGLKVYI) threads the bilayer. At 24 to 397 (EWTSESRLSK…KQLQDPRLQC (374 aa)) the chain is on the lumenal side. The disordered stretch occupies residues 33 to 58 (KAYPSPRGTPPSPTPANPEPTLPANL). Pro residues predominate over residues 39–53 (RGTPPSPTPANPEPT). N-linked (GlcNAc...) asparagine glycosylation is present at asparagine 57.

It belongs to the glycosyltransferase 31 family. As to quaternary structure, interacts with B3GNT2; this interaction greatly increases B3GNT2 catalytic activity, independently of B3GNT8 enzymatic activity. As to expression, highly expressed in small intestine, pancreas, spleen, bone marrow, lung, throat, and ileum, and weakly in fetal brain, cerebellum, heart, liver, tongue, breast, uteri, and testis. Not detected in colon. Differentially expressed in human tumor cell lines.

The protein resides in the golgi apparatus membrane. It participates in protein modification; protein glycosylation. Its function is as follows. Beta-1,3-N-acetylglucosaminyltransferase that plays a role in the elongation of specific branch structures of multiantennary N-glycans. Has strong activity towards tetraantennary N-glycans and 2,6 triantennary glycans. This Homo sapiens (Human) protein is UDP-GlcNAc:betaGal beta-1,3-N-acetylglucosaminyltransferase 8.